Here is a 112-residue protein sequence, read N- to C-terminus: UPF0342 protein STH1710 (112 aa).

This sequence belongs to the UPF0342 family.

This chain is UPF0342 protein STH1710, found in Symbiobacterium thermophilum (strain DSM 24528 / JCM 14929 / IAM 14863 / T).